The primary structure comprises 271 residues: 3-methyl-2-oxobutanoate hydroxymethyltransferase (271 aa).

Aspartate 51 and aspartate 90 together coordinate Mg(2+). Residues 51 to 52, aspartate 90, and lysine 118 each bind 3-methyl-2-oxobutanoate; that span reads DS. Glutamate 120 serves as a coordination point for Mg(2+). Glutamate 186 serves as the catalytic Proton acceptor.

It belongs to the PanB family. In terms of assembly, homodecamer; pentamer of dimers. Requires Mg(2+) as cofactor.

The protein resides in the cytoplasm. It catalyses the reaction 3-methyl-2-oxobutanoate + (6R)-5,10-methylene-5,6,7,8-tetrahydrofolate + H2O = 2-dehydropantoate + (6S)-5,6,7,8-tetrahydrofolate. It participates in cofactor biosynthesis; (R)-pantothenate biosynthesis; (R)-pantoate from 3-methyl-2-oxobutanoate: step 1/2. Catalyzes the reversible reaction in which hydroxymethyl group from 5,10-methylenetetrahydrofolate is transferred onto alpha-ketoisovalerate to form ketopantoate. In Xanthomonas euvesicatoria pv. vesicatoria (strain 85-10) (Xanthomonas campestris pv. vesicatoria), this protein is 3-methyl-2-oxobutanoate hydroxymethyltransferase.